The sequence spans 946 residues: MKPLSSPLQQYWQTVVERLPEPLAEESLSAQAKSVLTFSDFLQDSIIAHPEWLTELESQPPQADEWQHYAAWLQEALSNVSDEAGLMRELRLFRRRIMVRIAWAQTLALVTEESILQQLSHLAETLIVAARDWLYDACCREWGTPCNAQGEAQPLLILGMGKLGGGELNFSSDIDLIFAWPEHGCTQGGRRELDNAQFFTRMGQRLIKVQDQPTQDGFVYRVDMRLRPFGESGPLVLSFAALEDYYQEQGRDWERYAMVKARIMGDSDGVYANELRAMLRPFVFRRYIDFSVIQSLRNMKGMIAREVRRRGLTDNIKLGAGGIREIEFIVQVFQLIRGGREPSLQSRSLLPTLSAIAALHLLSENDAEQLRVAYLFLRRLENLLQSINDEQTQTLPFDELNRARLAWAMDFADWPQLTGVLTAHMANVRRVFNELIGDDESETQEESLSEQWRELWQDALQEDDTTPVLAHLSEDDRKQVLMLIADFRKELDKRTIGPRGRQVLDHLMPHLLSDVCAREDAAVTLSRITALLVGIVTRTTYLELLSEFPAALKHLISLCAASPMIASQLARYPLLLDELLDPNTLYQPTATDAYRDELRQYLLRVPEDDEEQQLEALRQFKQAQLLRIAAADIAGTLPVMKVSDHLTWLAEAMIDAVVQQAWVQMVARYGKPNHLNEREGRGFAVVGYGKLGGWELGYSSDLDLIFLHDCPMDAMTDGEREIDGRQFYLRLAQRIMHLFSTRTSSGILYEVDARLRPSGAAGMLVTSAEAFADYQKNEAWTWEHQALVRARVVYGDPQLTAHFDAVRREIMTLPREGKTLQTEVREMREKMRAHLGNKHRDRFDIKADEGGITDIEFITQYLVLRYAHEKPKLTRWSDNVRILELLAQNDIMEEQEAMALTRAYTTLRDELHHLALQELPGHVSEDCFTAERELVRASWQKWLVEE.

Positions 1–440 (MKPLSSPLQQ…VFNELIGDDE (440 aa)) are adenylyl removase. Residues 449 to 946 (SEQWRELWQD…ASWQKWLVEE (498 aa)) are adenylyl transferase.

It belongs to the GlnE family. The cofactor is Mg(2+).

The enzyme catalyses [glutamine synthetase]-O(4)-(5'-adenylyl)-L-tyrosine + phosphate = [glutamine synthetase]-L-tyrosine + ADP. It carries out the reaction [glutamine synthetase]-L-tyrosine + ATP = [glutamine synthetase]-O(4)-(5'-adenylyl)-L-tyrosine + diphosphate. Its function is as follows. Involved in the regulation of glutamine synthetase GlnA, a key enzyme in the process to assimilate ammonia. When cellular nitrogen levels are high, the C-terminal adenylyl transferase (AT) inactivates GlnA by covalent transfer of an adenylyl group from ATP to specific tyrosine residue of GlnA, thus reducing its activity. Conversely, when nitrogen levels are low, the N-terminal adenylyl removase (AR) activates GlnA by removing the adenylyl group by phosphorolysis, increasing its activity. The regulatory region of GlnE binds the signal transduction protein PII (GlnB) which indicates the nitrogen status of the cell. This chain is Bifunctional glutamine synthetase adenylyltransferase/adenylyl-removing enzyme, found in Escherichia coli O127:H6 (strain E2348/69 / EPEC).